The primary structure comprises 656 residues: Protein arginine N-methyltransferase 7 (656 aa).

2 consecutive SAM-dependent MTase PRMT-type domains span residues 12-338 (EREW…FSIW) and 343-656 (GKDS…QSGN).

The protein belongs to the class I-like SAM-binding methyltransferase superfamily. Protein arginine N-methyltransferase family. PRMT7 subfamily.

Functionally, arginine methyltransferase that can both catalyze the formation of omega-N monomethylarginine (MMA) and symmetrical dimethylarginine (sDMA). This Caenorhabditis briggsae protein is Protein arginine N-methyltransferase 7 (prmt-7).